A 214-amino-acid polypeptide reads, in one-letter code: MRVRHIPGAKEQLKEYEFYIQDPSQYQNQWHLYFQNQHPIHLEVGLGKGQFLTTLAKVHKNINYLGLEKSQEVLLQALKKLDRQVSRQELSNMGLFHYNALDLNEVFGEGNIEKIYLNFSDPWPKERHKKRRLTHQGFLKIYRGLLSEQGEIQIKTDNKALFEFSLQQLKEENFHFVQVIYNLHNDGIKDPFMTEYEEKFVKAGKTIYKCIATV.

S-adenosyl-L-methionine contacts are provided by Glu43, Glu68, Asn99, and Asp121. Residue Asp121 is part of the active site. Residues Lys125, Asp157, and Thr194–Glu197 each bind substrate.

The protein belongs to the class I-like SAM-binding methyltransferase superfamily. TrmB family.

The catalysed reaction is guanosine(46) in tRNA + S-adenosyl-L-methionine = N(7)-methylguanosine(46) in tRNA + S-adenosyl-L-homocysteine. The protein operates within tRNA modification; N(7)-methylguanine-tRNA biosynthesis. Functionally, catalyzes the formation of N(7)-methylguanine at position 46 (m7G46) in tRNA. This is tRNA (guanine-N(7)-)-methyltransferase from Alkaliphilus metalliredigens (strain QYMF).